The following is a 387-amino-acid chain: Succinyl-diaminopimelate desuccinylase (387 aa).

Residue H74 coordinates Zn(2+). D76 is a catalytic residue. D107 contacts Zn(2+). E142 (proton acceptor) is an active-site residue. E143, E171, and H360 together coordinate Zn(2+).

Belongs to the peptidase M20A family. DapE subfamily. Homodimer. The cofactor is Zn(2+). Co(2+) serves as cofactor.

It carries out the reaction N-succinyl-(2S,6S)-2,6-diaminopimelate + H2O = (2S,6S)-2,6-diaminopimelate + succinate. Its pathway is amino-acid biosynthesis; L-lysine biosynthesis via DAP pathway; LL-2,6-diaminopimelate from (S)-tetrahydrodipicolinate (succinylase route): step 3/3. Its function is as follows. Catalyzes the hydrolysis of N-succinyl-L,L-diaminopimelic acid (SDAP), forming succinate and LL-2,6-diaminopimelate (DAP), an intermediate involved in the bacterial biosynthesis of lysine and meso-diaminopimelic acid, an essential component of bacterial cell walls. The chain is Succinyl-diaminopimelate desuccinylase from Rhodopseudomonas palustris (strain TIE-1).